Reading from the N-terminus, the 331-residue chain is Phenylalanine--tRNA ligase alpha subunit (331 aa).

Glu-252 serves as a coordination point for Mg(2+).

This sequence belongs to the class-II aminoacyl-tRNA synthetase family. Phe-tRNA synthetase alpha subunit type 1 subfamily. Tetramer of two alpha and two beta subunits. It depends on Mg(2+) as a cofactor.

Its subcellular location is the cytoplasm. The enzyme catalyses tRNA(Phe) + L-phenylalanine + ATP = L-phenylalanyl-tRNA(Phe) + AMP + diphosphate + H(+). In Marinomonas sp. (strain MWYL1), this protein is Phenylalanine--tRNA ligase alpha subunit.